We begin with the raw amino-acid sequence, 200 residues long: Probable GTP-binding protein EngB (200 aa).

The 175-residue stretch at 25 to 199 folds into the EngB-type G domain; sequence SGYEVAFAGR…ISLLDRWYEW (175 aa). Residues 33 to 40, 60 to 64, 78 to 81, 145 to 148, and 178 to 180 contribute to the GTP site; these read GRSNAGKS, GRTQL, DLPG, TKAD, and FSS. Mg(2+) is bound by residues S40 and T62.

This sequence belongs to the TRAFAC class TrmE-Era-EngA-EngB-Septin-like GTPase superfamily. EngB GTPase family. Mg(2+) is required as a cofactor.

Its function is as follows. Necessary for normal cell division and for the maintenance of normal septation. The sequence is that of Probable GTP-binding protein EngB from Legionella pneumophila (strain Corby).